Consider the following 78-residue polypeptide: Large ribosomal subunit protein bL28 (78 aa).

Positions 1–21 (MSRVCQVTGKKPMVGNNRSHA) are disordered.

Belongs to the bacterial ribosomal protein bL28 family.

The sequence is that of Large ribosomal subunit protein bL28 from Shewanella piezotolerans (strain WP3 / JCM 13877).